Consider the following 216-residue polypeptide: Somatotropin (216 aa).

An N-terminal signal peptide occupies residues 1 to 26; that stretch reads MAAGPRTSALLAFALLCLPWTREVGA. His45 contacts Zn(2+). Residues Cys78 and Cys189 are joined by a disulfide bond. Ser131 is subject to Phosphoserine. Glu198 is a Zn(2+) binding site. Cys206 and Cys214 are disulfide-bonded.

The protein belongs to the somatotropin/prolactin family.

The protein localises to the secreted. Plays an important role in growth control. Its major role in stimulating body growth is to stimulate the liver and other tissues to secrete IGF1. It stimulates both the differentiation and proliferation of myoblasts. It also stimulates amino acid uptake and protein synthesis in muscle and other tissues. In Sus scrofa (Pig), this protein is Somatotropin (GH1).